The chain runs to 500 residues: Aromatic-L-amino-acid decarboxylase (500 aa).

Pro102 is an L-tryptophan binding site. Ser168 is a binding site for pyridoxal 5'-phosphate. L-tryptophan is bound at residue His203. Residue Thr262 participates in pyridoxal 5'-phosphate binding. His318 is a binding site for L-tryptophan. Position 319 is an N6-(pyridoxal phosphate)lysine (Lys319). Residue Tyr348 participates in L-tryptophan binding.

Belongs to the group II decarboxylase family. Homodimer. The cofactor is pyridoxal 5'-phosphate.

It catalyses the reaction L-tryptophan + H(+) = tryptamine + CO2. The catalysed reaction is 5-hydroxy-L-tryptophan + H(+) = serotonin + CO2. In terms of biological role, catalyzes the decarboxylation of L-tryptophan to tryptamine and L-5-hydroxytryptophan to serotonin, respectively. This chain is Aromatic-L-amino-acid decarboxylase, found in Catharanthus roseus (Madagascar periwinkle).